An 80-amino-acid chain; its full sequence is NADH-ubiquinone oxidoreductase chain 5 (80 aa).

Transmembrane regions (helical) follow at residues I4 to M24 and I44 to I64.

The protein belongs to the complex I subunit 5 family.

The protein resides in the mitochondrion inner membrane. The enzyme catalyses a ubiquinone + NADH + 5 H(+)(in) = a ubiquinol + NAD(+) + 4 H(+)(out). Functionally, core subunit of the mitochondrial membrane respiratory chain NADH dehydrogenase (Complex I) that is believed to belong to the minimal assembly required for catalysis. Complex I functions in the transfer of electrons from NADH to the respiratory chain. The immediate electron acceptor for the enzyme is believed to be ubiquinone. The chain is NADH-ubiquinone oxidoreductase chain 5 (ND5) from Ceratitis capitata (Mediterranean fruit fly).